Here is a 97-residue protein sequence, read N- to C-terminus: Co-chaperonin GroES (97 aa).

The protein belongs to the GroES chaperonin family. Heptamer of 7 subunits arranged in a ring. Interacts with the chaperonin GroEL.

Its subcellular location is the cytoplasm. In terms of biological role, together with the chaperonin GroEL, plays an essential role in assisting protein folding. The GroEL-GroES system forms a nano-cage that allows encapsulation of the non-native substrate proteins and provides a physical environment optimized to promote and accelerate protein folding. GroES binds to the apical surface of the GroEL ring, thereby capping the opening of the GroEL channel. This Buchnera aphidicola subsp. Tetraneura caerulescens protein is Co-chaperonin GroES.